A 449-amino-acid polypeptide reads, in one-letter code: Adenylosuccinate synthetase (449 aa).

GTP is bound by residues 12-18 (GDEGKGK) and 40-42 (GHT). The Proton acceptor role is filled by Asp13. The Mg(2+) site is built by Asp13 and Gly40. IMP-binding positions include 13–16 (DEGK), 38–41 (NAGH), Thr128, Arg142, Gln223, Thr238, and Arg302. Catalysis depends on His41, which acts as the Proton donor. Position 298 to 304 (298 to 304 (TTTGRQR)) interacts with substrate. GTP contacts are provided by residues Arg304, 330–332 (KLD), and 412–414 (SLG).

Belongs to the adenylosuccinate synthetase family. As to quaternary structure, homodimer. The cofactor is Mg(2+).

The protein resides in the cytoplasm. It catalyses the reaction IMP + L-aspartate + GTP = N(6)-(1,2-dicarboxyethyl)-AMP + GDP + phosphate + 2 H(+). It functions in the pathway purine metabolism; AMP biosynthesis via de novo pathway; AMP from IMP: step 1/2. Its function is as follows. Plays an important role in the de novo pathway of purine nucleotide biosynthesis. Catalyzes the first committed step in the biosynthesis of AMP from IMP. This chain is Adenylosuccinate synthetase, found in Synechococcus sp. (strain JA-2-3B'a(2-13)) (Cyanobacteria bacterium Yellowstone B-Prime).